A 115-amino-acid polypeptide reads, in one-letter code: Putative ethidium bromide resistance protein (115 aa).

4 consecutive transmembrane segments (helical) span residues 4–21 (WLFLVIAIVGEVIATSAL), 30–47 (LAPSAVVIIGYGIAFYFL), 58–79 (VAYAVWSGLGVVIITAIAWLLH), and 85–104 (AWGFVGMGLIIAAFLLARSP).

This sequence belongs to the drug/metabolite transporter (DMT) superfamily. Small multidrug resistance (SMR) (TC 2.A.7.1) family.

It is found in the cell membrane. Its function is as follows. One of the determinants for resistance to ethidium bromide and quaternary ammonium compounds. This Escherichia coli protein is Putative ethidium bromide resistance protein (ebr).